A 199-amino-acid chain; its full sequence is Large ribosomal subunit protein uL18 (199 aa).

The protein belongs to the universal ribosomal protein uL18 family. In terms of assembly, part of the 50S ribosomal subunit. Contacts the 5S and 23S rRNAs.

This is one of the proteins that bind and probably mediate the attachment of the 5S RNA into the large ribosomal subunit, where it forms part of the central protuberance. The sequence is that of Large ribosomal subunit protein uL18 from Saccharolobus solfataricus (strain ATCC 35092 / DSM 1617 / JCM 11322 / P2) (Sulfolobus solfataricus).